The sequence spans 295 residues: Glycine--tRNA ligase alpha subunit (295 aa).

The protein belongs to the class-II aminoacyl-tRNA synthetase family. As to quaternary structure, tetramer of two alpha and two beta subunits.

Its subcellular location is the cytoplasm. The enzyme catalyses tRNA(Gly) + glycine + ATP = glycyl-tRNA(Gly) + AMP + diphosphate. This chain is Glycine--tRNA ligase alpha subunit, found in Desulforamulus reducens (strain ATCC BAA-1160 / DSM 100696 / MI-1) (Desulfotomaculum reducens).